The following is a 290-amino-acid chain: Cbb3-type cytochrome c oxidase subunit FixP (290 aa).

The chain crosses the membrane as a helical span at residues 33-53 (WWVITFYITIVWAIGYWIVYP). Cytochrome c domains follow at residues 109 to 198 (LARA…RSLS) and 206 to 287 (YDAA…HSLG). Residues C122, C125, H126, M173, C219, C222, H223, and M264 each coordinate heme c.

The protein belongs to the CcoP / FixP family. Component of the cbb3-type cytochrome c oxidase at least composed of FixN, FixO, FixQ and FixP. Heme c serves as cofactor.

It is found in the cell inner membrane. It functions in the pathway energy metabolism; oxidative phosphorylation. C-type cytochrome. Part of the cbb3-type cytochrome c oxidase complex. FixP subunit is required for transferring electrons from donor cytochrome c via its heme groups to FixO subunit. From there, electrons are shuttled to the catalytic binuclear center of FixN subunit where oxygen reduction takes place. The complex also functions as a proton pump. In Bradyrhizobium sp. (strain ORS 278), this protein is Cbb3-type cytochrome c oxidase subunit FixP.